Here is a 351-residue protein sequence, read N- to C-terminus: GDP-mannose 4,6-dehydratase (351 aa).

Residues 11–16 (GVTGQD), 66–67 (DM), 88–92 (LAAQS), and Y103 each bind NADP(+). The active site involves T135. Residues E137 and Y159 each act as nucleophile in the active site. Positions 163, 189, and 194 each coordinate NADP(+).

The protein belongs to the NAD(P)-dependent epimerase/dehydratase family. GDP-mannose 4,6-dehydratase subfamily. It depends on NADP(+) as a cofactor.

It carries out the reaction GDP-alpha-D-mannose = GDP-4-dehydro-alpha-D-rhamnose + H2O. Its pathway is nucleotide-sugar biosynthesis; GDP-L-fucose biosynthesis via de novo pathway; GDP-L-fucose from GDP-alpha-D-mannose: step 1/2. In terms of biological role, catalyzes the conversion of GDP-D-mannose to GDP-4-dehydro-6-deoxy-D-mannose. The chain is GDP-mannose 4,6-dehydratase from Sinorhizobium fredii (strain HH103).